The following is a 142-amino-acid chain: Large ribosomal subunit protein uL11 (142 aa).

It belongs to the universal ribosomal protein uL11 family. As to quaternary structure, part of the ribosomal stalk of the 50S ribosomal subunit. Interacts with L10 and the large rRNA to form the base of the stalk. L10 forms an elongated spine to which L12 dimers bind in a sequential fashion forming a multimeric L10(L12)X complex. One or more lysine residues are methylated.

In terms of biological role, forms part of the ribosomal stalk which helps the ribosome interact with GTP-bound translation factors. This chain is Large ribosomal subunit protein uL11, found in Erwinia tasmaniensis (strain DSM 17950 / CFBP 7177 / CIP 109463 / NCPPB 4357 / Et1/99).